The chain runs to 301 residues: MNSASACCWWRLALPIADELEESLIWKLTELGISRIAVQHVPEKAERTLLAWLPSSEWSESDRDQLMVNLRPLAEPFGLQLANPTWCEVADEDWSLNWKQHWQSDPVGQRLLILPAWLDLPQEYADRLVVRMDPGSAFGTGSHPSTRLCLEALEKNPPLGLRVADLGCGSGVLGFAALGFGARQVLAADTDSQAVCASRANAELNQLDLDRFRVVHGSVDALSAQLQGEVVDLLLCNILAPVIEALASSFDQLLSANGRCLLSGLLVDQAPRLQVVLEALGWRVNSLTVQGCWGLLDVSKR.

Residues Thr146, Gly167, Asp189, and Asn237 each contribute to the S-adenosyl-L-methionine site.

This sequence belongs to the methyltransferase superfamily. PrmA family.

It localises to the cytoplasm. It carries out the reaction L-lysyl-[protein] + 3 S-adenosyl-L-methionine = N(6),N(6),N(6)-trimethyl-L-lysyl-[protein] + 3 S-adenosyl-L-homocysteine + 3 H(+). Its function is as follows. Methylates ribosomal protein L11. This is Ribosomal protein L11 methyltransferase from Prochlorococcus marinus (strain MIT 9303).